The sequence spans 282 residues: Leucine-rich protein (282 aa).

Its function is as follows. Not essential for viability or growth. Nevertheless, uncontrolled production in E.coli is detrimental to the normal physiology of the bacteria. The polypeptide is Leucine-rich protein (lrp) (Streptococcus dysgalactiae subsp. equisimilis (Streptococcus equisimilis)).